Reading from the N-terminus, the 164-residue chain is N5-carboxyaminoimidazole ribonucleotide mutase (164 aa).

Substrate is bound by residues S13, D16, and R43.

Belongs to the AIR carboxylase family. Class I subfamily.

The enzyme catalyses 5-carboxyamino-1-(5-phospho-D-ribosyl)imidazole + H(+) = 5-amino-1-(5-phospho-D-ribosyl)imidazole-4-carboxylate. The protein operates within purine metabolism; IMP biosynthesis via de novo pathway; 5-amino-1-(5-phospho-D-ribosyl)imidazole-4-carboxylate from 5-amino-1-(5-phospho-D-ribosyl)imidazole (N5-CAIR route): step 2/2. Functionally, catalyzes the conversion of N5-carboxyaminoimidazole ribonucleotide (N5-CAIR) to 4-carboxy-5-aminoimidazole ribonucleotide (CAIR). This chain is N5-carboxyaminoimidazole ribonucleotide mutase, found in Haemophilus influenzae (strain ATCC 51907 / DSM 11121 / KW20 / Rd).